The sequence spans 790 residues: AMP deaminase (790 aa).

The span at 1-14 shows a compositional bias: polar residues; it reads MSTPLRGSSPQVSF. Residues 1–26 are disordered; sequence MSTPLRGSSPQVSFYESELDQEGGSD. Residues H221 and H223 each contribute to the Zn(2+) site. Substrate is bound by residues H223 and 292–297; that span reads KFNLKY. H488 serves as a coordination point for Zn(2+). E491 lines the substrate pocket. The active-site Proton acceptor is H510. D565 lines the Zn(2+) pocket. 566-569 lines the substrate pocket; it reads DPLQ. Disordered regions lie at residues 698 to 726 and 739 to 790; these read NKLRNSSVGSTPNNGTPSSSGTPSLSSPG and PPPL…KSDK. 2 stretches are compositionally biased toward low complexity: residues 706 to 726 and 750 to 781; these read GSTPNNGTPSSSGTPSLSSPG and NNNNNNNNNNNNNNNNNNNTNTNTNSNSTTTN.

This sequence belongs to the metallo-dependent hydrolases superfamily. Adenosine and AMP deaminases family. In terms of assembly, homodimer. It depends on Zn(2+) as a cofactor.

It localises to the cytoplasm. The enzyme catalyses AMP + H2O + H(+) = IMP + NH4(+). It participates in purine metabolism; IMP biosynthesis via salvage pathway; IMP from AMP: step 1/1. Activated by ATP, inhibited by GTP, EDTA and inorganic phosphate. In terms of biological role, catalyzes the conversion of adenosine monophosphate (AMP) to inosine monophosphate (IMP) and ammonia (NH4(+)). Participates in the regulation of the adenylated nucleotide pool and the interconversion to guanylated nucleotides during early morphodifferentiation. The sequence is that of AMP deaminase (amdA) from Dictyostelium discoideum (Social amoeba).